The sequence spans 158 residues: Transcription antitermination protein NusB (158 aa).

The protein belongs to the NusB family.

Its function is as follows. Involved in transcription antitermination. Required for transcription of ribosomal RNA (rRNA) genes. Binds specifically to the boxA antiterminator sequence of the ribosomal RNA (rrn) operons. The protein is Transcription antitermination protein NusB of Bartonella henselae (strain ATCC 49882 / DSM 28221 / CCUG 30454 / Houston 1) (Rochalimaea henselae).